The following is a 330-amino-acid chain: Tryptophan--tRNA ligase (330 aa).

ATP-binding positions include 10–12 and 18–19; these read QAT and GN. Positions 11–19 match the 'HIGH' region motif; that stretch reads ATGSLHLGN. Residue D134 coordinates L-tryptophan. Residues 146–148, I186, and 195–199 each bind ATP; these read GED and KMSKS. Residues 195–199 carry the 'KMSKS' region motif; sequence KMSKS.

This sequence belongs to the class-I aminoacyl-tRNA synthetase family. In terms of assembly, homodimer.

The protein resides in the cytoplasm. It carries out the reaction tRNA(Trp) + L-tryptophan + ATP = L-tryptophyl-tRNA(Trp) + AMP + diphosphate + H(+). Catalyzes the attachment of tryptophan to tRNA(Trp). The chain is Tryptophan--tRNA ligase from Rickettsia conorii (strain ATCC VR-613 / Malish 7).